The primary structure comprises 95 residues: Osteocalcin 1 (95 aa).

The signal sequence occupies residues 1–21 (MKTLSVLVLCSLAVLCLTSDA). A propeptide spanning residues 22–50 (SFSSQPAVDTPAQEGLFVEQEQASSVVRQ) is cleaved from the precursor. In terms of domain architecture, Gla spans 45 to 91 (SSVVRQAPKELSLSQLESLREVCELNLACEDMMDTSGIIAAYTTYYG). Glutamate 61, glutamate 65, and glutamate 68 together coordinate Ca(2+). Glutamate 61, glutamate 65, and glutamate 68 each carry 4-carboxyglutamate. Cysteine 67 and cysteine 73 are disulfide-bonded.

It belongs to the osteocalcin/matrix Gla protein family. Post-translationally, gamma-carboxyglutamate residues are formed by vitamin K dependent carboxylation by GGCX. These residues are essential for the binding of calcium.

It is found in the secreted. The carboxylated form is one of the main organic components of the bone matrix, which constitutes 1-2% of the total bone protein. The carboxylated form binds strongly to apatite and calcium. The polypeptide is Osteocalcin 1 (Solea senegalensis (Senegalese sole)).